Here is a 74-residue protein sequence, read N- to C-terminus: Tetrahydromethanopterin S-methyltransferase subunit G (74 aa).

The chain crosses the membrane as a helical span at residues 50 to 70; the sequence is IGILYGLVIGLYLCMLYILLG.

Belongs to the MtrG family. The complex is composed of 8 subunits; MtrA, MtrB, MtrC, MtrD, MtrE, MtrF, MtrG and MtrH.

Its subcellular location is the cell membrane. The catalysed reaction is 5-methyl-5,6,7,8-tetrahydromethanopterin + coenzyme M + 2 Na(+)(in) = 5,6,7,8-tetrahydromethanopterin + methyl-coenzyme M + 2 Na(+)(out). It participates in one-carbon metabolism; methanogenesis from CO(2); methyl-coenzyme M from 5,10-methylene-5,6,7,8-tetrahydromethanopterin: step 2/2. Its function is as follows. Part of a complex that catalyzes the formation of methyl-coenzyme M and tetrahydromethanopterin from coenzyme M and methyl-tetrahydromethanopterin. This is an energy-conserving, sodium-ion translocating step. The polypeptide is Tetrahydromethanopterin S-methyltransferase subunit G (Methanopyrus kandleri (strain AV19 / DSM 6324 / JCM 9639 / NBRC 100938)).